Consider the following 311-residue polypeptide: Aquaporin Lacbi1:392091 (311 aa).

The Cytoplasmic segment spans residues 1-16; it reads MHPQVASLFDNVYEDL. A helical transmembrane segment spans residues 17 to 37; sequence AAATLEFIGTAFFLLFGLGGI. Residues 38 to 56 lie on the Extracellular side of the membrane; it reads QASTAEDTASGQPPASGIE. A helical transmembrane segment spans residues 57–77; it reads HVLYISTCMGLSLVVSAWLFF. A topological domain (cytoplasmic) is located at residue R78. A helical membrane pass occupies residues 79–99; it reads VTGGLFNPNISFALLLVGGLK. An NPA 1 motif is present at residues 85-87; the sequence is NPN. Position 100 (P100) is a topological domain, extracellular. Residues 101–121 form a helical membrane-spanning segment; sequence LRFVLFCIAQLTGAIAGAAIV. Topologically, residues 122 to 143 are cytoplasmic; the sequence is RGLTSAPLSVNNVLQQGTSAAQ. Residues 144–164 form a helical membrane-spanning segment; the sequence is GVFIEMFITAALVLSVLMLAA. Topologically, residues 165–168 are extracellular; sequence EKHE. The chain crosses the membrane as a helical span at residues 169 to 189; sequence ATPFAPVGIGLTLFACHLFAV. At 190–215 the chain is on the cytoplasmic side; that stretch reads YYTGAAMNSARAFGPAVISGFPEPQH. The NPA 2 motif lies at 197 to 199; it reads NSA. Residues 216–236 form a helical membrane-spanning segment; that stretch reads WVYWVGPFLGSLLGAGFYATL. The Extracellular portion of the chain corresponds to 237–311; sequence KHYKYWHLNP…TSSRTNFSPV (75 aa). The tract at residues 276–311 is disordered; it reads DEETRNGCASNEEGVRATGDEKSSNATSSRTNFSPV. Basic and acidic residues predominate over residues 288–298; it reads EGVRATGDEKS. Polar residues predominate over residues 299 to 311; that stretch reads SNATSSRTNFSPV. N300 is a glycosylation site (N-linked (GlcNAc...) asparagine).

Belongs to the MIP/aquaporin (TC 1.A.8) family.

Its subcellular location is the membrane. The enzyme catalyses H2O(in) = H2O(out). The catalysed reaction is NH4(+)(in) = NH4(+)(out). Its function is as follows. Water channel required to facilitate the transport of water across membranes. Also enables low but statistically significant ammonium permeability. May be involved in fungal nitrogen (ammonium) support of the plant host in symbiosis. This Laccaria bicolor (strain S238N-H82 / ATCC MYA-4686) (Bicoloured deceiver) protein is Aquaporin Lacbi1:392091.